Here is a 314-residue protein sequence, read N- to C-terminus: Vacuolar membrane protein FOSTERSO_4058 (314 aa).

The tract at residues K32 to G59 is disordered. Residues V93–L113 traverse the membrane as a helical segment. Phosphoserine is present on residues S148, S254, and S274. Residues E240–N309 are disordered. Basic and acidic residues predominate over residues S254–H269.

This sequence belongs to the PRM5 family.

It is found in the vacuole membrane. The polypeptide is Vacuolar membrane protein FOSTERSO_4058 (Saccharomyces cerevisiae (strain FostersO) (Baker's yeast)).